Consider the following 458-residue polypeptide: ATP synthase subunit beta (458 aa).

ATP is bound at residue 148-155 (GGAGVGKT).

The protein belongs to the ATPase alpha/beta chains family. F-type ATPases have 2 components, CF(1) - the catalytic core - and CF(0) - the membrane proton channel. CF(1) has five subunits: alpha(3), beta(3), gamma(1), delta(1), epsilon(1). CF(0) has three main subunits: a(1), b(2) and c(9-12). The alpha and beta chains form an alternating ring which encloses part of the gamma chain. CF(1) is attached to CF(0) by a central stalk formed by the gamma and epsilon chains, while a peripheral stalk is formed by the delta and b chains.

The protein localises to the cell inner membrane. The catalysed reaction is ATP + H2O + 4 H(+)(in) = ADP + phosphate + 5 H(+)(out). Its function is as follows. Produces ATP from ADP in the presence of a proton gradient across the membrane. The catalytic sites are hosted primarily by the beta subunits. The protein is ATP synthase subunit beta of Halorhodospira halophila (strain DSM 244 / SL1) (Ectothiorhodospira halophila (strain DSM 244 / SL1)).